The chain runs to 126 residues: Holo-[acyl-carrier-protein] synthase (126 aa).

The Mg(2+) site is built by aspartate 9 and glutamate 58.

Belongs to the P-Pant transferase superfamily. AcpS family. It depends on Mg(2+) as a cofactor.

It is found in the cytoplasm. The enzyme catalyses apo-[ACP] + CoA = holo-[ACP] + adenosine 3',5'-bisphosphate + H(+). Transfers the 4'-phosphopantetheine moiety from coenzyme A to a Ser of acyl-carrier-protein. This chain is Holo-[acyl-carrier-protein] synthase, found in Vibrio atlanticus (strain LGP32) (Vibrio splendidus (strain Mel32)).